The following is a 238-amino-acid chain: Probable transcriptional regulatory protein SUB0364 (238 aa).

The protein belongs to the TACO1 family. YeeN subfamily.

It localises to the cytoplasm. The protein is Probable transcriptional regulatory protein SUB0364 of Streptococcus uberis (strain ATCC BAA-854 / 0140J).